A 491-amino-acid polypeptide reads, in one-letter code: 23S rRNA (uracil(1939)-C(5))-methyltransferase RlmD (491 aa).

Residues 1–10 (MSDPTEHPEI) are compositionally biased toward basic and acidic residues. A disordered region spans residues 1-28 (MSDPTEHPEILQDPSSSAPVQGRTDLPP). The region spanning 18–81 (APVQGRTDLP…NNWEQASLTA (64 aa)) is the TRAM domain. [4Fe-4S] cluster contacts are provided by cysteine 94, cysteine 104, cysteine 107, and cysteine 186. 6 residues coordinate S-adenosyl-L-methionine: glutamine 294, phenylalanine 323, asparagine 328, glutamate 344, asparagine 379, and aspartate 400. Cysteine 447 (nucleophile) is an active-site residue.

The protein belongs to the class I-like SAM-binding methyltransferase superfamily. RNA M5U methyltransferase family. RlmD subfamily.

The enzyme catalyses uridine(1939) in 23S rRNA + S-adenosyl-L-methionine = 5-methyluridine(1939) in 23S rRNA + S-adenosyl-L-homocysteine + H(+). Functionally, catalyzes the formation of 5-methyl-uridine at position 1939 (m5U1939) in 23S rRNA. The sequence is that of 23S rRNA (uracil(1939)-C(5))-methyltransferase RlmD from Paracidovorax citrulli (strain AAC00-1) (Acidovorax citrulli).